A 329-amino-acid chain; its full sequence is Chlorophyllase-1, chloroplastic (329 aa).

A chloroplast-targeting transit peptide spans 1–21; that stretch reads MAAMVDSKPAASVQGTPLLAT. The GXSXG motif lies at 145–149; sequence GHSRG. The Nucleophile role is filled by Ser-147. Residues Asp-169 and His-242 each act as charge relay system in the active site.

The protein belongs to the AB hydrolase superfamily. Lipase family.

It is found in the plastid. The protein localises to the chloroplast. It catalyses the reaction a chlorophyll + H2O = a chlorophyllide + phytol + H(+). It functions in the pathway porphyrin-containing compound metabolism; chlorophyll degradation. Functionally, catalyzes the hydrolysis of ester bond in chlorophyll to yield chlorophyllide and phytol. The polypeptide is Chlorophyllase-1, chloroplastic (Citrus unshiu (Satsuma mandarin)).